A 209-amino-acid chain; its full sequence is LexA repressor (209 aa).

The H-T-H motif DNA-binding region spans 28 to 48 (RVELAKILGFRSANAAEEHLK). Active-site for autocatalytic cleavage activity residues include S126 and K163.

It belongs to the peptidase S24 family. As to quaternary structure, homodimer.

It catalyses the reaction Hydrolysis of Ala-|-Gly bond in repressor LexA.. Functionally, represses a number of genes involved in the response to DNA damage (SOS response), including recA and lexA. In the presence of single-stranded DNA, RecA interacts with LexA causing an autocatalytic cleavage which disrupts the DNA-binding part of LexA, leading to derepression of the SOS regulon and eventually DNA repair. In Psychromonas ingrahamii (strain DSM 17664 / CCUG 51855 / 37), this protein is LexA repressor.